The sequence spans 144 residues: Large ribosomal subunit protein uL24 (144 aa).

The segment at 1 to 22 is disordered; sequence MKFNKMVSSDRGKNRKRHFNAP. Positions 13-22 are enriched in basic residues; that stretch reads KNRKRHFNAP.

This sequence belongs to the universal ribosomal protein uL24 family.

This chain is Large ribosomal subunit protein uL24 (RPL26), found in Littorina littorea (Common periwinkle).